Reading from the N-terminus, the 475-residue chain is Eukaryotic translation initiation factor 3 subunit L (475 aa).

Residues 257–451 (DAIRMFSHIL…DLDYAMQGDL (195 aa)) form the PCI domain.

Belongs to the eIF-3 subunit L family. Component of the eukaryotic translation initiation factor 3 (eIF-3) complex.

The protein resides in the cytoplasm. Component of the eukaryotic translation initiation factor 3 (eIF-3) complex, which is involved in protein synthesis of a specialized repertoire of mRNAs and, together with other initiation factors, stimulates binding of mRNA and methionyl-tRNAi to the 40S ribosome. The eIF-3 complex specifically targets and initiates translation of a subset of mRNAs involved in cell proliferation. The sequence is that of Eukaryotic translation initiation factor 3 subunit L from Sclerotinia sclerotiorum (strain ATCC 18683 / 1980 / Ss-1) (White mold).